A 176-amino-acid polypeptide reads, in one-letter code: Sperm-egg fusion protein TMEM95 (176 aa).

A signal peptide spans 1 to 16; that stretch reads MWVLALGGAFLAVAKA. 4 disulfides stabilise this stretch: Cys-17/Cys-119, Cys-20/Cys-122, Cys-106/Cys-129, and Cys-110/Cys-135. Residues 17–146 lie on the Extracellular side of the membrane; that stretch reads CIFCRLQDHA…PDSHDLWDAR (130 aa). Asn-36 and Asn-118 each carry an N-linked (GlcNAc...) asparagine glycan. A helical membrane pass occupies residues 147 to 167; it reads ILLLCIFGIVLLSGVVSLQVE. Residues 168–176 lie on the Cytoplasmic side of the membrane; sequence YLNLQAKDL.

Belongs to the TMEM95 family. Does not interact with sperm-egg fusion proteins IZUMO1 or IZUMO1R/JUNO. Post-translationally, N-glycosylated. In terms of tissue distribution, expressed exclusively in testis.

It is found in the cytoplasmic vesicle. The protein resides in the secretory vesicle. The protein localises to the acrosome membrane. Functionally, sperm protein required for fusion of sperm with the egg membrane during fertilization. The protein is Sperm-egg fusion protein TMEM95 of Mus musculus (Mouse).